A 738-amino-acid polypeptide reads, in one-letter code: Protostadienol synthase A (738 aa).

The PFTB 1 repeat unit spans residues 132–173 (KQEMCRYLLNVVNEDGGWGLFIQSPSTVFGTVMNYCMLRILG). The active-site Proton donor is the aspartate 463. 3 PFTB repeats span residues 490-531 (LQQA…YENV), 567-607 (VSRS…ACMG), and 616-663 (CQRA…AVIG).

Belongs to the terpene cyclase/mutase family.

It carries out the reaction (S)-2,3-epoxysqualene = (17Z)-protosta-17(20),24-dien-3beta-ol. Its function is as follows. Protostadienol synthase which cyclizes (3S)-oxidosqualene to (17Z)-protosta-17(20),24-dien-3-beta-ol (protostadienol), the biosynthetic precursor of helvolic acid, a secondary metabolite which promotes virulence. The polypeptide is Protostadienol synthase A (pdsA) (Neosartorya fischeri (strain ATCC 1020 / DSM 3700 / CBS 544.65 / FGSC A1164 / JCM 1740 / NRRL 181 / WB 181) (Aspergillus fischerianus)).